Here is a 448-residue protein sequence, read N- to C-terminus: Omega-6 fatty acid desaturase, chloroplastic (448 aa).

The N-terminal 69 residues, 1-69, are a transit peptide targeting the chloroplast; that stretch reads MASRIADSLF…VKRRIGCIKA (69 aa). Position 70 is an N-acetylvaline (Val-70). The next 2 helical transmembrane spans lie at 124–144 and 149–169; these read LKAL…LFMI and WYLL…FFVI. The short motif at 171 to 175 is the Histidine box-1 element; sequence HDCAH. The short motif at 207 to 211 is the Histidine box-2 element; it reads HDRHH. 2 helical membrane passes run 282–302 and 303–323; these read VFAF…ILGW and VKFW…FTMV. The short motif at 367 to 371 is the Histidine box-3 element; that stretch reads HIPHH.

It belongs to the fatty acid desaturase type 1 family.

It is found in the plastid. The protein resides in the chloroplast inner membrane. It catalyses the reaction a (9Z)-octadecenoyl-containing glycerolipid + 2 reduced [2Fe-2S]-[ferredoxin] + O2 + 2 H(+) = a (9Z,12Z)-octadecadienoyl-containing glycerolipid + 2 oxidized [2Fe-2S]-[ferredoxin] + 2 H2O. Its pathway is lipid metabolism; polyunsaturated fatty acid biosynthesis. Functionally, chloroplast omega-6 fatty acid desaturase introduces the second double bond in the biosynthesis of 16:3 and 18:3 fatty acids, important constituents of plant membranes. It is thought to use ferredoxin as an electron donor and to act on fatty acids esterified to galactolipids, sulfolipids and phosphatidylglycerol. The sequence is that of Omega-6 fatty acid desaturase, chloroplastic from Arabidopsis thaliana (Mouse-ear cress).